The sequence spans 142 residues: Large ribosomal subunit protein uL11 (142 aa).

Belongs to the universal ribosomal protein uL11 family. In terms of assembly, part of the ribosomal stalk of the 50S ribosomal subunit. Interacts with L10 and the large rRNA to form the base of the stalk. L10 forms an elongated spine to which L12 dimers bind in a sequential fashion forming a multimeric L10(L12)X complex. In terms of processing, one or more lysine residues are methylated.

Forms part of the ribosomal stalk which helps the ribosome interact with GTP-bound translation factors. This is Large ribosomal subunit protein uL11 from Glaesserella parasuis serovar 5 (strain SH0165) (Haemophilus parasuis).